A 205-amino-acid chain; its full sequence is Arginine exporter protein ArgO (205 aa).

Transmembrane regions (helical) follow at residues 1 to 21, 42 to 62, 67 to 87, 111 to 131, 147 to 167, and 185 to 205; these read MLAV…PLGP, LCAL…SALL, LLLA…GWGA, ILVT…DTFV, WFAL…AFLA, and LFVG…GFGL.

Belongs to the LysE/ArgO transporter (TC 2.A.75) family.

It is found in the cell inner membrane. The enzyme catalyses L-arginine(in) = L-arginine(out). Its function is as follows. Involved in the export of arginine. Important to control the intracellular level of arginine and the correct balance between arginine and lysine. This chain is Arginine exporter protein ArgO, found in Yersinia pseudotuberculosis serotype O:3 (strain YPIII).